The following is a 228-amino-acid chain: Adapter protein MecA (228 aa).

Belongs to the MecA family. Homodimer.

Its function is as follows. Enables the recognition and targeting of unfolded and aggregated proteins to the ClpC protease or to other proteins involved in proteolysis. The polypeptide is Adapter protein MecA (Lacticaseibacillus paracasei (strain ATCC 334 / BCRC 17002 / CCUG 31169 / CIP 107868 / KCTC 3260 / NRRL B-441) (Lactobacillus paracasei)).